A 420-amino-acid chain; its full sequence is D-tagatose-1,6-bisphosphate aldolase subunit GatZ (420 aa).

This sequence belongs to the GatZ/KbaZ family. GatZ subfamily. Forms a complex with GatY.

It functions in the pathway carbohydrate metabolism; D-tagatose 6-phosphate degradation; D-glyceraldehyde 3-phosphate and glycerone phosphate from D-tagatose 6-phosphate: step 2/2. Functionally, component of the tagatose-1,6-bisphosphate aldolase GatYZ that is required for full activity and stability of the Y subunit. Could have a chaperone-like function for the proper and stable folding of GatY. When expressed alone, GatZ does not show any aldolase activity. Is involved in the catabolism of galactitol. The sequence is that of D-tagatose-1,6-bisphosphate aldolase subunit GatZ from Escherichia coli O7:K1 (strain IAI39 / ExPEC).